We begin with the raw amino-acid sequence, 217 residues long: Large ribosomal subunit protein uL3 (217 aa).

The interval 129–162 is disordered; the sequence is SRGPMSHGSKNHRAPGSTGAGTTPGRIYPGKRMA. Residues 142 to 153 are compositionally biased toward low complexity; that stretch reads APGSTGAGTTPG.

The protein belongs to the universal ribosomal protein uL3 family. In terms of assembly, part of the 50S ribosomal subunit. Forms a cluster with proteins L14 and L19.

Its function is as follows. One of the primary rRNA binding proteins, it binds directly near the 3'-end of the 23S rRNA, where it nucleates assembly of the 50S subunit. The polypeptide is Large ribosomal subunit protein uL3 (Prochlorococcus marinus (strain MIT 9215)).